We begin with the raw amino-acid sequence, 322 residues long: Probable L-asparaginase (322 aa).

The 315-residue stretch at 6-320 folds into the Asparaginase/glutaminase domain; sequence PRLALIHTGG…EDIRRVFTQG (315 aa). Positions 13 to 37 are disordered; that stretch reads TGGTIASRPSPDGRGLTPQTPPALP. The active-site O-isoaspartyl threonine intermediate is T16. Residues S54 and 85–86 contribute to the substrate site; that span reads TD.

Belongs to the asparaginase 1 family.

It is found in the cytoplasm. It catalyses the reaction L-asparagine + H2O = L-aspartate + NH4(+). The sequence is that of Probable L-asparaginase (ansA) from Deinococcus radiodurans (strain ATCC 13939 / DSM 20539 / JCM 16871 / CCUG 27074 / LMG 4051 / NBRC 15346 / NCIMB 9279 / VKM B-1422 / R1).